The primary structure comprises 542 residues: Chaperonin GroEL (542 aa).

Residues 29–32 (TLGP), 86–90 (DGTTT), Gly-413, 476–478 (NAA), and Asp-492 contribute to the ATP site. The tract at residues 523-542 (EPAAPAMPGGMDPSMMGGMM) is disordered. A compositionally biased stretch (low complexity) spans 526 to 542 (APAMPGGMDPSMMGGMM).

It belongs to the chaperonin (HSP60) family. As to quaternary structure, forms a cylinder of 14 subunits composed of two heptameric rings stacked back-to-back. Interacts with the co-chaperonin GroES.

It is found in the cytoplasm. It carries out the reaction ATP + H2O + a folded polypeptide = ADP + phosphate + an unfolded polypeptide.. Its function is as follows. Together with its co-chaperonin GroES, plays an essential role in assisting protein folding. The GroEL-GroES system forms a nano-cage that allows encapsulation of the non-native substrate proteins and provides a physical environment optimized to promote and accelerate protein folding. The polypeptide is Chaperonin GroEL (Streptococcus uberis (strain ATCC BAA-854 / 0140J)).